We begin with the raw amino-acid sequence, 633 residues long: DNA mismatch repair protein MutL (633 aa).

The tract at residues 338–407 (AAPEPERTLP…VPPPTLRAIP (70 aa)) is disordered. Residues 366 to 391 (PGSAFPAAARPAPASSAAQPPLSSSA) are compositionally biased toward low complexity.

The protein belongs to the DNA mismatch repair MutL/HexB family.

Functionally, this protein is involved in the repair of mismatches in DNA. It is required for dam-dependent methyl-directed DNA mismatch repair. May act as a 'molecular matchmaker', a protein that promotes the formation of a stable complex between two or more DNA-binding proteins in an ATP-dependent manner without itself being part of a final effector complex. In Akkermansia muciniphila (strain ATCC BAA-835 / DSM 22959 / JCM 33894 / BCRC 81048 / CCUG 64013 / CIP 107961 / Muc), this protein is DNA mismatch repair protein MutL.